The sequence spans 401 residues: Anhydro-N-acetylmuramic acid kinase (401 aa).

Position 25–32 (G25–D32) interacts with ATP.

This sequence belongs to the anhydro-N-acetylmuramic acid kinase family.

The enzyme catalyses 1,6-anhydro-N-acetyl-beta-muramate + ATP + H2O = N-acetyl-D-muramate 6-phosphate + ADP + H(+). It participates in amino-sugar metabolism; 1,6-anhydro-N-acetylmuramate degradation. It functions in the pathway cell wall biogenesis; peptidoglycan recycling. Catalyzes the specific phosphorylation of 1,6-anhydro-N-acetylmuramic acid (anhMurNAc) with the simultaneous cleavage of the 1,6-anhydro ring, generating MurNAc-6-P. Is required for the utilization of anhMurNAc either imported from the medium or derived from its own cell wall murein, and thus plays a role in cell wall recycling. The polypeptide is Anhydro-N-acetylmuramic acid kinase (Pseudoalteromonas translucida (strain TAC 125)).